Reading from the N-terminus, the 175-residue chain is ADP-ribosylation factor 6 (175 aa).

Residue glycine 2 is the site of N-myristoyl glycine attachment. Residues 20-27 (GLDAAGKT), 63-67 (DVGGQ), and 122-125 (NKQD) each bind GTP.

Belongs to the small GTPase superfamily. Arf family. As to expression, expressed in the head (at protein level).

It is found in the golgi apparatus. With respect to regulation, activation is generally mediated by a guanine exchange factor (GEF), while inactivation through hydrolysis of bound GTP is catalyzed by a GTPase activating protein (GAP). May be activated by Efa6. Functionally, GTP-binding protein involved in protein trafficking; may modulate vesicle budding and uncoating within the Golgi apparatus. Promotes cell movement and remodeling of the actin cytoskeleton during compound eye morphogenesis. Required for normal ethanol-induced tolerance and preference. Probably after Efa6-mediated activation, counteracts ethanol-induced sedation. This chain is ADP-ribosylation factor 6, found in Drosophila melanogaster (Fruit fly).